A 188-amino-acid chain; its full sequence is Large ribosomal subunit protein bL32m (188 aa).

Residues C110, C113, C123, and C126 each coordinate Zn(2+). The interval 162-188 (GETPSEHDQGKRIIERERKRPSWFTQN) is disordered. Residues 165 to 181 (PSEHDQGKRIIERERKR) show a composition bias toward basic and acidic residues.

It belongs to the bacterial ribosomal protein bL32 family. In terms of assembly, component of the mitochondrial ribosome large subunit (39S) which comprises a 16S rRNA and about 50 distinct proteins. Post-translationally, MRPL32 precursor is processed by the m-AAA protease (composed of AFG3L2 and SPG7), which cleaves the N-terminal transit peptide. Cleavage by the m-AAA protease takes place prior to assembly into the large subunit, an essential step for mitochondrial ribosome (mitoribosome) assembly. Proper processing by the m-AAA protease is dependent on the zinc-binding region within the tightly folded C-terminal domain of MRPL32: zinc-dependent folding halts degradation initiated from the N-terminus and triggers the release of mature MRPL32.

The protein resides in the mitochondrion. Its function is as follows. Component of the mitochondrial large ribosomal subunit (mt-LSU). The mitochondrial ribosome (mitoribosome) is a large ribonucleoprotein complex responsible for the synthesis of proteins inside mitochondria. The chain is Large ribosomal subunit protein bL32m (MRPL32) from Bos taurus (Bovine).